Here is a 313-residue protein sequence, read N- to C-terminus: MNVGIKGFGAYAPEKVVDNAYFESFLETSDEWISKMTGIKERRWASENQDTSDLAFEASKKAIKDAGITPADIDMIIVATATGDMPFPSVANILQEKLDTRKVPTMDQLAACSGFMYSMITAKQYVQSGDYKNILVVGADKLSKITDLTDRSTAVLFGDGAGAVVIGEVSEGRGIISYEMGSDGNGGKYLYLNKDTGKLVMNGREVFKFAVRIMGEASTRVVDKAGLQSDDIDMFIPHQANIRIMESARERLGIEREKMSVSVNRFGNTSAASIPLSISQELENGRIKDDDTLVLVGFGGGLTWGAMVIKWGK.

Active-site residues include Cys112 and His238. Residues 239-243 (QANIR) are ACP-binding. Residue Asn268 is part of the active site.

It belongs to the thiolase-like superfamily. FabH family. As to quaternary structure, homodimer.

The protein resides in the cytoplasm. It catalyses the reaction malonyl-[ACP] + acetyl-CoA + H(+) = 3-oxobutanoyl-[ACP] + CO2 + CoA. The protein operates within lipid metabolism; fatty acid biosynthesis. In terms of biological role, catalyzes the condensation reaction of fatty acid synthesis by the addition to an acyl acceptor of two carbons from malonyl-ACP. Catalyzes the first condensation reaction which initiates fatty acid synthesis and may therefore play a role in governing the total rate of fatty acid production. Possesses both acetoacetyl-ACP synthase and acetyl transacylase activities. Its substrate specificity determines the biosynthesis of branched-chain and/or straight-chain of fatty acids. In Staphylococcus haemolyticus (strain JCSC1435), this protein is Beta-ketoacyl-[acyl-carrier-protein] synthase III.